Consider the following 498-residue polypeptide: Histone-lysine N-methyltransferase SET5 (498 aa).

The segment at 68–94 is disordered; the sequence is KPNDGCTSRSTSCPGGKKKKKSKTDTS. Residues 108–415 enclose the SET domain; it reads AGIRGVYFDP…PDDELVISYI (308 aa).

The protein belongs to the class V-like SAM-binding methyltransferase superfamily. Histone-lysine methyltransferase family. SET5 subfamily.

It localises to the nucleus. It is found in the chromosome. Its subcellular location is the cytoplasm. The enzyme catalyses L-lysyl-[histone] + S-adenosyl-L-methionine = N(6)-methyl-L-lysyl-[histone] + S-adenosyl-L-homocysteine + H(+). Functionally, histone methyltransferase that monomethylates 'Lys-5', 'Lys-8' and 'Lys-12' of histone H4 (H4K5me1, H4K8me1 and H4K12me1, respectively), thereby controlling gene expression and remodeling chromatin structures. This is Histone-lysine N-methyltransferase SET5 (SET5) from Mycosarcoma maydis (Corn smut fungus).